Reading from the N-terminus, the 251-residue chain is Lactose phosphotransferase system repressor (251 aa).

The HTH deoR-type domain occupies 3–58 (KEERLEEITKLINKRGTIRVTEVVERLKVSDMTVRRDLTELEGLGVLTRIHGGARS). A DNA-binding region (H-T-H motif) is located at residues 20 to 39 (IRVTEVVERLKVSDMTVRRD).

Repressor of the lactose catabolism operon. Galactose-6-phosphate is the inducer. The sequence is that of Lactose phosphotransferase system repressor (lacR) from Streptococcus mutans serotype c (strain ATCC 700610 / UA159).